The primary structure comprises 277 residues: Large ribosomal subunit protein uL2 (277 aa).

A disordered region spans residues 222-258 (GSVMNPCDHPHGGGEGRSPIGRPSPVTPWGKPALGYK).

Belongs to the universal ribosomal protein uL2 family. As to quaternary structure, part of the 50S ribosomal subunit. Forms a bridge to the 30S subunit in the 70S ribosome.

In terms of biological role, one of the primary rRNA binding proteins. Required for association of the 30S and 50S subunits to form the 70S ribosome, for tRNA binding and peptide bond formation. It has been suggested to have peptidyltransferase activity; this is somewhat controversial. Makes several contacts with the 16S rRNA in the 70S ribosome. This chain is Large ribosomal subunit protein uL2, found in Clostridium perfringens (strain 13 / Type A).